We begin with the raw amino-acid sequence, 98 residues long: Feather beta keratin (98 aa).

The residue at position 2 (Ser2) is an N-acetylserine.

This sequence belongs to the avian keratin family. In terms of assembly, the avian keratins (F-ker, S-ker, C-ker and B-ker) are a complex mixture of very similar polypeptides.

The sequence is that of Feather beta keratin from Mycteria americana (Wood stork).